The following is a 384-amino-acid chain: Alpha-2B adrenergic receptor (384 aa).

Residues 1 to 25 traverse the membrane as a helical segment; it reads AIAAVITFLILFTIFGNALVILAVL. The Cytoplasmic portion of the chain corresponds to 26 to 36; sequence TSRSLRAPQNL. A helical membrane pass occupies residues 37-62; that stretch reads FLVSLAAADILVATLIIPFSLANELL. The Extracellular segment spans residues 63–72; it reads GYWYFRRTWC. Cys-72 and Cys-151 form a disulfide bridge. The chain crosses the membrane as a helical span at residues 73 to 95; it reads EVYLALDVLFCTSSIVHLCAISL. At 96 to 117 the chain is on the cytoplasmic side; that stretch reads DRYWAVSRALQYNSKRTPRRIK. A helical membrane pass occupies residues 118–140; that stretch reads CVILTVWLIAAAISLPPLIYKGD. The Extracellular segment spans residues 141–156; it reads QGPQPRGRPQCKLNQE. The chain crosses the membrane as a helical span at residues 157 to 180; it reads AWYILSSSIGSFFAPCLIMILVYL. At 181–348 the chain is on the cytoplasmic side; sequence RIYLIAKRSN…LTREKRFTFV (168 aa). Positions 192–289 are disordered; it reads RGPRAKGAPR…PEEEEECGSP (98 aa). A compositionally biased stretch (polar residues) spans 218–229; it reads LANSPTLASSLA. Residues 240 to 249 show a composition bias toward basic and acidic residues; the sequence is PPGEKERETP. The chain crosses the membrane as a helical span at residues 349–372; it reads LAVVIGVFVLCWFPFFFSYSLGAI. The Extracellular segment spans residues 373 to 381; the sequence is CPQHCKVPH. The chain crosses the membrane as a helical span at residues 382–384; it reads GLF.

This sequence belongs to the G-protein coupled receptor 1 family. Adrenergic receptor subfamily. ADRA2B sub-subfamily. As to quaternary structure, interacts with RAB26. Interacts with PPP1R9B. Interacts with GGA1, GGA2 and GGA3.

The protein resides in the cell membrane. Alpha-2 adrenergic receptors mediate the catecholamine-induced inhibition of adenylate cyclase through the action of G proteins. This chain is Alpha-2B adrenergic receptor (ADRA2B), found in Elephas maximus (Indian elephant).